A 135-amino-acid chain; its full sequence is Large ribosomal subunit protein uL18 (135 aa).

Positions 1–23 are disordered; it reads MAQTQADTAARKPVGQSVSATRR.

The protein belongs to the universal ribosomal protein uL18 family. In terms of assembly, part of the 50S ribosomal subunit; part of the 5S rRNA/L5/L18/L25 subcomplex. Contacts the 5S and 23S rRNAs.

In terms of biological role, this is one of the proteins that bind and probably mediate the attachment of the 5S RNA into the large ribosomal subunit, where it forms part of the central protuberance. The protein is Large ribosomal subunit protein uL18 of Mycobacterium marinum (strain ATCC BAA-535 / M).